Reading from the N-terminus, the 344-residue chain is E3 ubiquitin-protein ligase RING2-A (344 aa).

Residues 2 to 181 (ATPVNAQCSS…EDNCDSRSHV (180 aa)) form an interaction with HIP2 region. The segment at 48–88 (CPICLDMLKNTMTTKECLHRFCSDCIVTALRSGNKECPTCR) adopts an RING-type zinc-finger fold. An interaction with nucleosomes via an acidic patch on histone H2A and histone H2B region spans residues 90–95 (KLVSKR). The disordered stretch occupies residues 148 to 230 (QAMHRAQRVR…DPPGGGETGS (83 aa)). A compositionally biased stretch (polar residues) spans 180 to 192 (HVSNPSVHSNQEA).

As to quaternary structure, component of chromatin-associated Polycomb (PcG) complexes. Component of a PRC1-like complex. Component of some MLL1/MLL complex.

Its subcellular location is the nucleus. The protein localises to the cytoplasm. The protein resides in the chromosome. The enzyme catalyses S-ubiquitinyl-[E2 ubiquitin-conjugating enzyme]-L-cysteine + [acceptor protein]-L-lysine = [E2 ubiquitin-conjugating enzyme]-L-cysteine + N(6)-ubiquitinyl-[acceptor protein]-L-lysine.. It functions in the pathway protein modification; protein ubiquitination. Functionally, E3 ubiquitin-protein ligase that mediates monoubiquitination of 'Lys-119' of histone H2A (H2AK119Ub), thereby playing a central role in histone code and gene regulation. H2AK119Ub gives a specific tag for epigenetic transcriptional repression. Essential component of a Polycomb group (PcG) multiprotein PRC1-like complex, a complex class required to maintain the transcriptionally repressive state of many genes, including Hox genes, throughout development. PcG PRC1 complex acts via chromatin remodeling and modification of histones, rendering chromatin heritably changed in its expressibility. This chain is E3 ubiquitin-protein ligase RING2-A (rnf2-a), found in Xenopus laevis (African clawed frog).